The chain runs to 238 residues: tRNA (guanine-N(7)-)-methyltransferase (238 aa).

S-adenosyl-L-methionine-binding residues include Glu-68, Glu-93, Asp-120, and Asp-143. Asp-143 is a catalytic residue. Substrate is bound by residues Lys-147, Asp-179, and Thr-216 to Glu-219.

The protein belongs to the class I-like SAM-binding methyltransferase superfamily. TrmB family.

The catalysed reaction is guanosine(46) in tRNA + S-adenosyl-L-methionine = N(7)-methylguanosine(46) in tRNA + S-adenosyl-L-homocysteine. Its pathway is tRNA modification; N(7)-methylguanine-tRNA biosynthesis. Functionally, catalyzes the formation of N(7)-methylguanine at position 46 (m7G46) in tRNA. The sequence is that of tRNA (guanine-N(7)-)-methyltransferase from Shewanella oneidensis (strain ATCC 700550 / JCM 31522 / CIP 106686 / LMG 19005 / NCIMB 14063 / MR-1).